The sequence spans 842 residues: Probable receptor-like protein kinase At5g61350 (842 aa).

The signal sequence occupies residues 1-27; the sequence is MGGDFRHFSSHVSLLLLFLLIVKSSSS. At 28-425 the chain is on the extracellular side; sequence FTPADNYLID…IGGMSSKKLA (398 aa). N-linked (GlcNAc...) asparagine glycosylation is found at N81, N125, N252, N294, N359, and N365. Residues 426 to 446 traverse the membrane as a helical segment; it reads IAGIGFVMALTAFLGVVVLLV. The Cytoplasmic segment spans residues 447–842; that stretch reads RWQRRPKDWQ…EMQSPSHSIP (396 aa). Residues 525–803 enclose the Protein kinase domain; sequence FDENAVCGVG…GDVLWNLEYA (279 aa). ATP contacts are provided by residues 531–539 and K553; that span reads CGVGGFGKV. The active-site Proton acceptor is D655.

The protein belongs to the protein kinase superfamily. Ser/Thr protein kinase family.

Its subcellular location is the membrane. In Arabidopsis thaliana (Mouse-ear cress), this protein is Probable receptor-like protein kinase At5g61350.